The chain runs to 264 residues: Small ribosomal subunit protein uS3 (264 aa).

Residues 39 to 107 (VRDFLKKKLK…PVHVNIEEIR (69 aa)) enclose the KH type-2 domain. Positions 211-264 (NDAPVVEEPQDDRRRRPGRPEGRRREGEGRPGGNRRGGAGAGRRAAPGDAKSGE) are disordered. Residues 221–239 (DDRRRRPGRPEGRRREGEG) are compositionally biased toward basic and acidic residues. Positions 240-251 (RPGGNRRGGAGA) are enriched in gly residues.

This sequence belongs to the universal ribosomal protein uS3 family. Part of the 30S ribosomal subunit. Forms a tight complex with proteins S10 and S14.

Functionally, binds the lower part of the 30S subunit head. Binds mRNA in the 70S ribosome, positioning it for translation. The polypeptide is Small ribosomal subunit protein uS3 (Cupriavidus pinatubonensis (strain JMP 134 / LMG 1197) (Cupriavidus necator (strain JMP 134))).